Here is a 1324-residue protein sequence, read N- to C-terminus: MDSESDDNPNDPEDRKKWGHKDVEHWRAVSNVHYYAREGYFGTAILVCDGRLATIKDPALAILKGVCLTLLGKIPDAIRHLETFVTDNDVALGALHALKWAHASAFNPDNKSIVEIETEISTRARNEKTPYTSYATASEVLYFAGEYQKSKQMLDIARKRATEKHAKHYCLLGWIELALGKKQKSTQELFEKAGGQEYPDGNIGRCKILEGHHSAPEMKVAANELAISTIHFLPGHIEKAKASIMMKDWRGVMDCIMNADQPEGSNPYIEVLRTVHGICYAGEVSMLKRTLQLLLKSLDENEATNHVLYARITKLLVSISGRDEKILRHARDFLTRALKISRKPDYVALSMRIAFGLGGAKEVSTLSQELVALDCEDSYAVLSSVVSMLMISRVSDARAQFDILPSAHPKLLESPLYYLIASVLAKQSKDKSFENFRQHIENLVEMLRNQLQSFPFGLDYLSLFSSDLLYSAVEQCFDFYPLVPIKAPDDCMKLTAKTLQMIYDVAPGLAHCTLQLARNSYLCSNTNAAEKWIEKVLDKDDSLADAHILRAELILDRGGKITDADDALVTGLNFNFKLRETSLYHLIKSKTFKKRNENDEAIKTLKMALQIPRKEPSKNLFQPKESADTHKISVQLELIDTLQHMKRIQEAETTMTDALAEWAGQPEQDQLVIAQAQLYLTKGHVERALGILKKIQPGQSNFHLSRIKMAEIYLEEKKDKRMFAACYRELLKVEATPGSYSLLGDAFMKVQEPEDAINFYEQALKMQSKDVQLAEKIGEAYVMAHLYSKAVNFYESSMNIYKDKNMRLKLANLLLKLRNFEKCEKVLRAPFERDPEPVGTETIQTYIQFLLLLAECHEMMDNVPEAMNDFEKAKSLHSRIQDKTLTAALKKEGARICNLQAELLYRRREFSQAVDICKQALAYHETDLKANLLLSKIFKEENKWTLVLQPCQTVIQVDPHNDEANSILADFYYIRSEAAHASTSYTTLLNTNPQHWHALSRVVELFCRNGEQNAAEKHLDRAKEVNPRCVTESGYNVCRGRFEWYTGDQNEALRYYSRTKDSAAGWREKALYYMIDICLNPDNEIIIDENSVENPETTIVEEASEQQKLAKYYLDLLGKLPTTDRFLLAQNFIRMHTTDKSAIQAALDEFNRMAFNADRSQVTNVGAVFGVARGHVLLKQVQKAKTVLKMVNGRVWNFDDSDYLEKCWLMLADIYINQNKNDQAVTFLDLVFKYNCNCLKAFELYGYMREKEQKYVEAYKMYEKAFMATKERNPGFGYKLAFTYLKAKRLFACIETCQKVLDLNPQYPKIKKEIMDKAKALIRT.

TPR repeat units lie at residues 58–91 (PALAILKGVCLTLLGKIPDAIRHLETFVTDNDVA), 414–446 (SPLYYLIASVLAKQSKDKSFENFRQHIENLVEM), 582–615 (SLYHLIKSKTFKKRNENDEAIKTLKMALQIPRKE), 669–702 (DQLVIAQAQLYLTKGHVERALGILKKIQPGQSNF), 737–770 (PGSYSLLGDAFMKVQEPEDAINFYEQALKMQSKD), 772–804 (QLAEKIGEAYVMAHLYSKAVNFYESSMNIYKDK), 806–837 (MRLKLANLLLKLRNFEKCEKVLRAPFERDPEP), 847–880 (IQFLLLLAECHEMMDNVPEAMNDFEKAKSLHSRI), 894–927 (ARICNLQAELLYRRREFSQAVDICKQALAYHETD), 929–961 (KANLLLSKIFKEENKWTLVLQPCQTVIQVDPHN), 963–995 (EANSILADFYYIRSEAAHASTSYTTLLNTNPQH), 997–1029 (HALSRVVELFCRNGEQNAAEKHLDRAKEVNPRC), 1033–1066 (SGYNVCRGRFEWYTGDQNEALRYYSRTKDSAAGW), 1205–1238 (EKCWLMLADIYINQNKNDQAVTFLDLVFKYNCNC), 1240–1272 (KAFELYGYMREKEQKYVEAYKMYEKAFMATKER), and 1274–1307 (PGFGYKLAFTYLKAKRLFACIETCQKVLDLNPQY).

Belongs to the TTC21 family. As to quaternary structure, component of the IFT complex A (IFT-A) composed of at least che-11, daf-10, dyf-2, ift-139, ift-43 and ifta-1. Expressed in ciliated sensory neurons in the head and tail.

Its subcellular location is the cell projection. The protein localises to the cilium. The protein resides in the cytoplasm. It is found in the cytoskeleton. It localises to the cilium basal body. Its subcellular location is the dendrite. Functionally, component of the IFT complex A (IFT-A), a complex required for retrograde ciliary transport. In particular, may act redundantly with the intraflagellar transport protein ift-43 to regulate the transport of specific ciliary cargo proteins such as che-3 which are related to motility. Functions in cilia biogenesis. The sequence is that of Tetratricopeptide repeat protein 21 homolog from Caenorhabditis elegans.